The primary structure comprises 197 residues: dTTP/UTP pyrophosphatase (197 aa).

Asp-70 functions as the Proton acceptor in the catalytic mechanism.

This sequence belongs to the Maf family. YhdE subfamily. A divalent metal cation serves as cofactor.

Its subcellular location is the cytoplasm. It carries out the reaction dTTP + H2O = dTMP + diphosphate + H(+). The catalysed reaction is UTP + H2O = UMP + diphosphate + H(+). Functionally, nucleoside triphosphate pyrophosphatase that hydrolyzes dTTP and UTP. May have a dual role in cell division arrest and in preventing the incorporation of modified nucleotides into cellular nucleic acids. The protein is dTTP/UTP pyrophosphatase of Pectobacterium atrosepticum (strain SCRI 1043 / ATCC BAA-672) (Erwinia carotovora subsp. atroseptica).